We begin with the raw amino-acid sequence, 241 residues long: Superoxide dismutase [Mn] 2, mitochondrial (241 aa).

Residues His-60, His-108, Asp-197, and His-201 each coordinate Mn(2+).

Belongs to the iron/manganese superoxide dismutase family. As to quaternary structure, homotetramer. Requires Mn(2+) as cofactor.

The protein resides in the mitochondrion matrix. It catalyses the reaction 2 superoxide + 2 H(+) = H2O2 + O2. In terms of biological role, destroys superoxide anion radicals which are normally produced within the cells and which are toxic to biological systems. This is Superoxide dismutase [Mn] 2, mitochondrial (MSD2) from Arabidopsis thaliana (Mouse-ear cress).